A 305-amino-acid chain; its full sequence is Ribosomal RNA small subunit methyltransferase H (305 aa).

S-adenosyl-L-methionine is bound by residues glycine 30–histidine 32, aspartate 49, phenylalanine 74, aspartate 96, and glutamine 103.

The protein belongs to the methyltransferase superfamily. RsmH family.

The protein localises to the cytoplasm. It catalyses the reaction cytidine(1402) in 16S rRNA + S-adenosyl-L-methionine = N(4)-methylcytidine(1402) in 16S rRNA + S-adenosyl-L-homocysteine + H(+). In terms of biological role, specifically methylates the N4 position of cytidine in position 1402 (C1402) of 16S rRNA. The chain is Ribosomal RNA small subunit methyltransferase H from Francisella tularensis subsp. holarctica (strain LVS).